Reading from the N-terminus, the 445-residue chain is MGLTSVHVGLDDTDSPLGLCTTFVALAIVREASRIGAGFADLPYLVRLNPNVPLKTRGNGAVAIHFLVEEELVPRVEEAVVRALDDLSERHGKTDPAAILVKGDVPRAFRSVYLRALTEFIPSSYVRSVLERFKGESVKLLYSRSKRPRGLVGAVASLGAYPLEDYTYELIVYRSPEERSESRDISEDLLLELDRKYRPLVFATYDYSSRRVLAVPHGPDPVIFGLRSLDPEILVNVAVDVLEKISHAGYLLFKTNQGTSAHLQRYKPVALVRPYDSVVVRGSVAEKPTVISGGHVIVNVCDETGCLQIAFYKETGRLNRVAKLLSRGDLVEVGGGVMKKDGLVLNAEYLRLIKPALNVKRLNPLCPKCGSRMTSAGKGKGYKCPKCGYRAKEAAKIYRVAPRTLEPGTYFQSPSAYRHLTKPPEILGLRPVDATKVLLSGMWFM.

Residues valine 278–tyrosine 349 constitute a DNA-binding region (OB).

Belongs to the TiaS family.

The protein resides in the cytoplasm. It catalyses the reaction cytidine(34) in tRNA(Ile2) + agmatine + ATP + H2O = 2-agmatinylcytidine(34) in tRNA(Ile2) + AMP + 2 phosphate + 2 H(+). Functionally, ATP-dependent agmatine transferase that catalyzes the formation of 2-agmatinylcytidine (agm2C) at the wobble position (C34) of tRNA(Ile2), converting the codon specificity from AUG to AUA. This Thermofilum pendens (strain DSM 2475 / Hrk 5) protein is tRNA(Ile2) 2-agmatinylcytidine synthetase TiaS.